Reading from the N-terminus, the 86-residue chain is Small ribosomal subunit protein bS20 (86 aa).

A compositionally biased stretch (basic residues) spans 1 to 27 (MANIKSAKKRAVQSEKRRQHNASRRSM). Positions 1–28 (MANIKSAKKRAVQSEKRRQHNASRRSMM) are disordered.

Belongs to the bacterial ribosomal protein bS20 family.

Functionally, binds directly to 16S ribosomal RNA. This chain is Small ribosomal subunit protein bS20, found in Proteus mirabilis (strain HI4320).